The chain runs to 182 residues: MAFPTAEELTALIAPVVATRHLDVEGLRVTKAGPKSTVAIKLDSDSRPDLDLLEVVSQEIGELFDAAEARGELSFGAGYLLEVSTPGVDMPLTQPRHWRRNRTRLVSLDVDGKKRIARIGALNAEETAVILIERNKKALSVTVLELANSPRAVVEIEFAKPAQDELDLAGRTFDEAVEETDH.

This sequence belongs to the RimP family.

The protein localises to the cytoplasm. Required for maturation of 30S ribosomal subunits. The chain is Ribosome maturation factor RimP from Corynebacterium efficiens (strain DSM 44549 / YS-314 / AJ 12310 / JCM 11189 / NBRC 100395).